Consider the following 76-residue polypeptide: Endothelin-1 (76 aa).

The endothelin-like stretch occupies residues 30 to 44 (CQCASQKDKKCWNFC).

It belongs to the endothelin/sarafotoxin family.

The protein localises to the secreted. Functionally, endothelins are endothelium-derived vasoconstrictor peptides. Probable ligand for G-protein coupled receptors EDNRA and EDNRB which activates PTK2B, BCAR1, BCAR3 and, GTPases RAP1 and RHOA cascade in glomerular mesangial cells. Also binds the DEAR/FBXW7-AS1 receptor. Promotes mesenteric arterial wall remodeling via activation of ROCK signaling and subsequent colocalization of NFATC3 with F-actin filaments. NFATC3 then translocates to the nucleus where it subsequently promotes the transcription of the smooth muscle hypertrophy and differentiation marker ACTA2. The polypeptide is Endothelin-1 (EDN1) (Macaca fascicularis (Crab-eating macaque)).